The sequence spans 497 residues: Probable cytosol aminopeptidase (497 aa).

2 residues coordinate Mn(2+): Lys262 and Asp267. Lys274 is an active-site residue. Asp285, Asp344, and Glu346 together coordinate Mn(2+). The active site involves Arg348.

The protein belongs to the peptidase M17 family. Mn(2+) is required as a cofactor.

The protein resides in the cytoplasm. The catalysed reaction is Release of an N-terminal amino acid, Xaa-|-Yaa-, in which Xaa is preferably Leu, but may be other amino acids including Pro although not Arg or Lys, and Yaa may be Pro. Amino acid amides and methyl esters are also readily hydrolyzed, but rates on arylamides are exceedingly low.. The enzyme catalyses Release of an N-terminal amino acid, preferentially leucine, but not glutamic or aspartic acids.. Its function is as follows. Presumably involved in the processing and regular turnover of intracellular proteins. Catalyzes the removal of unsubstituted N-terminal amino acids from various peptides. The protein is Probable cytosol aminopeptidase of Rhizobium etli (strain ATCC 51251 / DSM 11541 / JCM 21823 / NBRC 15573 / CFN 42).